The chain runs to 575 residues: Transcription factor COE2 (575 aa).

The interval 62–65 (RKSN) is interaction with DNA. The C5-type zinc finger occupies 150-169 (CRVLLTHEVMCSRCCEKKSC). Interaction with DNA regions lie at residues 196–203 (NCLKTAGN) and 235–238 (NNSK). The IPT/TIG domain maps to 253 to 336 (PCIKAISPSE…KGAPGRFIYT (84 aa)). Residues 441 to 453 (STQGNNQGYIRNT) are compositionally biased toward polar residues. Residues 441-479 (STQGNNQGYIRNTSSISPRGYSSSSTPQQSNYSTSSNSM) are disordered. Residues 454 to 479 (SSISPRGYSSSSTPQQSNYSTSSNSM) are compositionally biased toward low complexity.

It belongs to the COE family. As to quaternary structure, forms either a homodimer or a heterodimer with a related family member. Interacts with SIX1. In terms of tissue distribution, in adult expressed in olfactory epithelium and at a much lower level in Purkinje cells of the cerebellum. In embryo expressed in epithalamus, in cells near the ventricular zone of mesencephalon and on the ventral surface of rhombencephalon, in the developing vomeronasal organ, at a lower level in developing spinal cord. Not expressed in developing retina, inner ear, dorsal root ganglia, trigeminal ganglia and glossopharyngeal ganglia.

It localises to the nucleus. Its function is as follows. Transcription factor that, in osteoblasts, activates the decoy receptor for RANKL, TNFRSF11B, which in turn regulates osteoclast differentiation. Acts in synergy with the Wnt-responsive LEF1/CTNNB1 pathway. Recognizes variations of the palindromic sequence 5'-ATTCCCNNGGGAATT-3'. The protein is Transcription factor COE2 (Ebf2) of Mus musculus (Mouse).